We begin with the raw amino-acid sequence, 251 residues long: Membrane-anchored junction protein (251 aa).

The Nuclear segment spans residues 1–227 (MSLKPFTYPF…HSNPPPLKEP (227 aa)). Residues 140–225 (RKRKLMEEPS…LEHSNPPPLK (86 aa)) form a disordered region. A compositionally biased stretch (polar residues) spans 183-198 (EDSQQDTPASDSTAVT). The chain crosses the membrane as a helical span at residues 228–246 (AARGFLGFLSALFPFRYFF). Residues 247–251 (RKSTQ) lie on the Perinuclear space side of the membrane.

The protein belongs to the MAJIN family. In terms of assembly, component of the MAJIN-TERB1-TERB2 complex, composed of MAJIN, TERB1 and TERB2.

The protein localises to the nucleus inner membrane. The protein resides in the chromosome. It localises to the telomere. Meiosis-specific telomere-associated protein involved in meiotic telomere attachment to the nucleus inner membrane, a crucial step for homologous pairing and synapsis. Component of the MAJIN-TERB1-TERB2 complex, which promotes telomere cap exchange by mediating attachment of telomeric DNA to the inner nuclear membrane and replacement of the protective cap of telomeric chromosomes: in early meiosis, the MAJIN-TERB1-TERB2 complex associates with telomeric DNA and the shelterin/telosome complex. During prophase, the complex matures and promotes release of the shelterin/telosome complex from telomeric DNA. In the complex, MAJIN acts as the anchoring subunit to the nucleus inner membrane. MAJIN shows DNA-binding activity, possibly for the stabilization of telomere attachment on the nucleus inner membrane. The polypeptide is Membrane-anchored junction protein (Rattus norvegicus (Rat)).